The sequence spans 1238 residues: Virulence sensor protein BvgS (1238 aa).

A signal peptide spans 1–30 (MPAPHRLYPRSLICLAQALLAWALLAWAPA). Residues 33–307 (SQELTLVGKA…REQQWMANHP (275 aa)) lie on the Cytoplasmic side of the membrane. Residues 308–331 (VVKVAVLNLFAPFTLFRTDEQFGG) traverse the membrane as a helical segment. Over 332–541 (ISAAVLQLLQ…PRTWYAYRNE (210 aa)) the chain is Periplasmic. Residues 542–563 (IYLLIGLGLLSALLFLSWIVYL) traverse the membrane as a helical segment. The Cytoplasmic portion of the chain corresponds to 564-1238 (RRQIRQRKRA…LEQRPHQGQP (675 aa)). The 72-residue stretch at 580–651 (QLEFMRVLID…MHEFLLTRMS (72 aa)) folds into the PAS domain. One can recognise a PAC domain in the interval 652 to 708 (AEREPRFEDRDVTLHGRTRHVYQWTVPYGDSLGELKGIIGGWIDITERAELLRELHD). The Histidine kinase domain maps to 726 to 948 (TMSHEIRTPM…TVSVDLRLTM (223 aa)). A Phosphohistidine; by autocatalysis modification is found at His-729. One can recognise a Response regulatory domain in the interval 974–1095 (RVLVVDDHKP…ALRQRLNEAA (122 aa)). Position 1023 is a 4-aspartylphosphate (Asp-1023). In terms of domain architecture, HPt spans 1133-1228 (DEALIRQLLE…AALETQLRAW (96 aa)). His-1172 is subject to Phosphohistidine.

Post-translationally, activation requires a sequential transfer of a phosphate group from a His in the primary transmitter domain, to an Asp in the receiver domain and to a His in the secondary transmitter domain.

It localises to the cell inner membrane. It carries out the reaction ATP + protein L-histidine = ADP + protein N-phospho-L-histidine.. Its function is as follows. Member of the two-component regulatory system BvgS/BvgA. Phosphorylates BvgA via a four-step phosphorelay in response to environmental signals. This Bordetella bronchiseptica (strain ATCC BAA-588 / NCTC 13252 / RB50) (Alcaligenes bronchisepticus) protein is Virulence sensor protein BvgS (bvgS).